Consider the following 772-residue polypeptide: Subtilisin-like protease SBT5.3 (772 aa).

Residues 1 to 25 (MKLTHNFSFLLLLLLVHMSSKHILA) form the signal peptide. The region spanning 31 to 116 (SYVVYFGAHS…VFPNKALKLH (86 aa)) is the Inhibitor I9 domain. A Peptidase S8 domain is found at 120–628 (SWDFLGLEHN…AGHVQPNLAV (509 aa)). Aspartate 153 serves as the catalytic Charge relay system. Residue asparagine 211 is glycosylated (N-linked (GlcNAc...) asparagine). Catalysis depends on histidine 223, which acts as the Charge relay system. N-linked (GlcNAc...) asparagine glycans are attached at residues asparagine 246, asparagine 306, and asparagine 396. In terms of domain architecture, PA spans 398–480 (SALDAQLCKL…KDSFAVSRYI (83 aa)). Serine 561 functions as the Charge relay system in the catalytic mechanism. 5 N-linked (GlcNAc...) asparagine glycosylation sites follow: asparagine 606, asparagine 651, asparagine 662, asparagine 684, and asparagine 725.

It belongs to the peptidase S8 family. As to expression, expressed specifically at sites of lateral root emergence.

The protein localises to the secreted. The protein resides in the cell wall. In terms of biological role, serine protease. Has a substrate preference for the hydrophobic residues Phe and Ala and the basic residue Asp in the P1 position, and for Asp, Leu or Ala in the P1' position. May play a role in the degradation of structural proteins in the extracellular matrix of cells located above sites of lateral root formation and thus facilitate lateral root emergence. This Arabidopsis thaliana (Mouse-ear cress) protein is Subtilisin-like protease SBT5.3 (AIR3).